A 284-amino-acid polypeptide reads, in one-letter code: MFEKLSCHTSIKIGGRVKYLVLPNDVFSLERAINVLGDVPFQMMGLGTNLLVQDDDLDIAVVKTERLNQIEIKGEKVLVESGTPLKRLCLFLMEAELGGLEFAYGIPGSVGGAIYMNAGAYGGEIGEFVEAVEVLRDGKRTWLSKNEIFFGYRDSTFKREKSIITRVMMSFKREKKEVIKAKMDDYIKRRLEKQPLDLPSAGSVFKRPREDFYVGKAIESLGLKGYRIGGAQISEKHAGFIVNAGNATFDDVMKLIEFVRKKVKEKYGVELETEVEIWWNGRRW.

In terms of domain architecture, FAD-binding PCMH-type spans 12-174 (KIGGRVKYLV…TRVMMSFKRE (163 aa)). The active site involves Arg-153. Ser-203 (proton donor) is an active-site residue. Residue Glu-274 is part of the active site.

Belongs to the MurB family. It depends on FAD as a cofactor.

Its subcellular location is the cytoplasm. The catalysed reaction is UDP-N-acetyl-alpha-D-muramate + NADP(+) = UDP-N-acetyl-3-O-(1-carboxyvinyl)-alpha-D-glucosamine + NADPH + H(+). The protein operates within cell wall biogenesis; peptidoglycan biosynthesis. In terms of biological role, cell wall formation. The polypeptide is UDP-N-acetylenolpyruvoylglucosamine reductase (Thermotoga petrophila (strain ATCC BAA-488 / DSM 13995 / JCM 10881 / RKU-1)).